The following is a 308-amino-acid chain: Acyltransferase drtE (308 aa).

An AB hydrolase-1 domain is found at 35–159 (PALVMNPGYN…AAEAKDNFSR (125 aa)).

The protein belongs to the polyketide transferase af380 family.

Its pathway is secondary metabolite biosynthesis; terpenoid biosynthesis. In terms of biological role, acyltransferase; part of the gene cluster that mediates the biosynthesis of various drimane-type sesquiterpene esters, compounds that exhibit diverse biological activities and are widely present in eukaryotes. The pathway begins with the synthesis of the backbone drimenol by the terpene cyclase drtB using farnesyl pyrophosphate (FPP) as substrate. The cytochrome P450 monooxygenase drtD is then responsible for the hydroxylations at C-6, C-9 and C-12, as well as the oxidation of hydroxyl groups at C-6 and C-11 to a ketone and an aldehyde, respectively. Then, the biosynthesis can go in two directions, either the hydroxylated drimenol is further hydroxylated at C-2 and C-3 by an enzyme(s) not associated with the drt cluster, or the FAD-binding oxidoreductase drtC further oxidizes C-11 or C-12 to form the butyrolactone ring. DrtB, drtD and drtC are solely responsible for the formation of the different drimane structures observed during drimane sesquiterpenes biosynthesis. The polyketide synthase drtA synthesizes different lengths (C6 and C8) of PKS chains, which are then oxidized to varying degrees by the short-chain dehydrogenase drtF. Finally, these PKS chains are transferred onto drimane sesquiterpenes by the acyltransferase drtE, forming the sesquiterpene esters. In addition to the different fatty acyl-CoA chains produced by drtA, drtE is also able to use cinnamoyl-CoA as a substrate. The sequence is that of Acyltransferase drtE from Aspergillus calidoustus.